The sequence spans 313 residues: 2,3-dihydroxyphenylpropionate/2,3-dihydroxicinnamic acid 1,2-dioxygenase (313 aa).

The Proton donor role is filled by His-115. The Proton acceptor role is filled by His-179.

The protein belongs to the LigB/MhpB extradiol dioxygenase family. Homotetramer. It depends on Fe(2+) as a cofactor.

The catalysed reaction is 3-(2,3-dihydroxyphenyl)propanoate + O2 = (2Z,4E)-2-hydroxy-6-oxonona-2,4-dienedioate + H(+). The enzyme catalyses (2E)-3-(2,3-dihydroxyphenyl)prop-2-enoate + O2 = (2Z,4E,7E)-2-hydroxy-6-oxonona-2,4,7-trienedioate + H(+). It functions in the pathway aromatic compound metabolism; 3-phenylpropanoate degradation. Catalyzes the non-heme iron(II)-dependent oxidative cleavage of 2,3-dihydroxyphenylpropionic acid and 2,3-dihydroxicinnamic acid into 2-hydroxy-6-ketononadienedioate and 2-hydroxy-6-ketononatrienedioate, respectively. Also catalyzes the cleavage of catechol. The polypeptide is 2,3-dihydroxyphenylpropionate/2,3-dihydroxicinnamic acid 1,2-dioxygenase (mhpB) (Cupriavidus necator (Alcaligenes eutrophus)).